The primary structure comprises 491 residues: Ketol-acid reductoisomerase (NADP(+)) (491 aa).

The region spanning 15 to 208 (AQLGKCRFMG…GGHRAGVLES (194 aa)) is the KARI N-terminal Rossmann domain. NADP(+) is bound by residues 45 to 48 (CGAQ), arginine 68, arginine 76, serine 78, and 108 to 110 (DKQ). The active site involves histidine 132. Residue glycine 158 participates in NADP(+) binding. 2 consecutive KARI C-terminal knotted domains span residues 209–344 (SFVA…TAPQ) and 345–484 (YEGK…MTDM). Mg(2+) is bound by residues aspartate 217, glutamate 221, glutamate 389, and glutamate 393. Serine 414 contributes to the substrate binding site.

This sequence belongs to the ketol-acid reductoisomerase family. Mg(2+) serves as cofactor.

The enzyme catalyses (2R)-2,3-dihydroxy-3-methylbutanoate + NADP(+) = (2S)-2-acetolactate + NADPH + H(+). It carries out the reaction (2R,3R)-2,3-dihydroxy-3-methylpentanoate + NADP(+) = (S)-2-ethyl-2-hydroxy-3-oxobutanoate + NADPH + H(+). It participates in amino-acid biosynthesis; L-isoleucine biosynthesis; L-isoleucine from 2-oxobutanoate: step 2/4. Its pathway is amino-acid biosynthesis; L-valine biosynthesis; L-valine from pyruvate: step 2/4. In terms of biological role, involved in the biosynthesis of branched-chain amino acids (BCAA). Catalyzes an alkyl-migration followed by a ketol-acid reduction of (S)-2-acetolactate (S2AL) to yield (R)-2,3-dihydroxy-isovalerate. In the isomerase reaction, S2AL is rearranged via a Mg-dependent methyl migration to produce 3-hydroxy-3-methyl-2-ketobutyrate (HMKB). In the reductase reaction, this 2-ketoacid undergoes a metal-dependent reduction by NADPH to yield (R)-2,3-dihydroxy-isovalerate. The chain is Ketol-acid reductoisomerase (NADP(+)) from Salmonella arizonae (strain ATCC BAA-731 / CDC346-86 / RSK2980).